A 289-amino-acid chain; its full sequence is Protease HtpX homolog (289 aa).

2 consecutive transmembrane segments (helical) span residues 10–30 (TAAL…VIGS) and 34–54 (STTP…YGYW). Histidine 138 is a binding site for Zn(2+). Residue glutamate 139 is part of the active site. Position 142 (histidine 142) interacts with Zn(2+). 2 helical membrane passes run 153 to 173 (VAAA…IFGG) and 182 to 202 (LAVM…QSAI). Residue glutamate 207 coordinates Zn(2+).

The protein belongs to the peptidase M48B family. Requires Zn(2+) as cofactor.

The protein localises to the cell membrane. The protein is Protease HtpX homolog of Arthrobacter sp. (strain FB24).